A 92-amino-acid chain; its full sequence is C-C motif chemokine 5 (92 aa).

The N-terminal stretch at 1–23 (MKVSTAAFAVLLTAAAFCTPASA) is a signal peptide. 2 cysteine pairs are disulfide-bonded: cysteine 33/cysteine 57 and cysteine 34/cysteine 73.

This sequence belongs to the intercrine beta (chemokine CC) family.

The protein resides in the secreted. Chemoattractant for blood monocytes, memory T-helper cells and eosinophils. Causes the release of histamine from basophils and activates eosinophils. May activate several chemokine receptors including CCR1, CCR3, CCR4 and CCR5. May also be an agonist of the G protein-coupled receptor GPR75. Together with GPR75, may play a role in neuron survival through activation of a downstream signaling pathway involving the PI3, Akt and MAP kinases. By activating GPR75 may also play a role in insulin secretion by islet cells. This Felis catus (Cat) protein is C-C motif chemokine 5 (CCL5).